The chain runs to 299 residues: Pentalenolactone F synthase (299 aa).

Residues His105 and Asp107 each contribute to the Fe cation site. 2-oxoglutarate contacts are provided by Thr133 and Trp251. Residue His266 participates in Fe cation binding. Arg277 lines the 2-oxoglutarate pocket.

Belongs to the TfdA dioxygenase family. Requires Fe(2+) as cofactor.

The enzyme catalyses pentalenolactone D + 2 2-oxoglutarate + 2 O2 = pentalenolactone F + 2 succinate + 2 CO2 + H2O. The protein operates within antibiotic biosynthesis; pentalenolactone biosynthesis. Its activity is regulated as follows. Activated by ascorbate. Its function is as follows. Catalyzes the Fe(2+) and alpha-ketoglutarate-dependent oxidation of pentalenolactone D to pentalenolactone F in the biosynthesis of pentalenolactone antibiotic. Also able to catalyze the oxidation of pentalenolactone D to pentalenolactone E. In Streptomyces arenae, this protein is Pentalenolactone F synthase (pntD).